Reading from the N-terminus, the 407-residue chain is Imidazolonepropionase (407 aa).

Fe(3+) is bound by residues His68 and His70. Zn(2+)-binding residues include His68 and His70. Positions 77, 140, and 173 each coordinate 4-imidazolone-5-propanoate. Position 140 (Tyr140) interacts with N-formimidoyl-L-glutamate. His238 is a Fe(3+) binding site. His238 lines the Zn(2+) pocket. Position 241 (Gln241) interacts with 4-imidazolone-5-propanoate. Residue Asp313 coordinates Fe(3+). Asp313 contributes to the Zn(2+) binding site. N-formimidoyl-L-glutamate is bound by residues Asn315 and Gly317. Residue Thr318 participates in 4-imidazolone-5-propanoate binding.

It belongs to the metallo-dependent hydrolases superfamily. HutI family. It depends on Zn(2+) as a cofactor. Fe(3+) serves as cofactor.

It localises to the cytoplasm. The catalysed reaction is 4-imidazolone-5-propanoate + H2O = N-formimidoyl-L-glutamate. The protein operates within amino-acid degradation; L-histidine degradation into L-glutamate; N-formimidoyl-L-glutamate from L-histidine: step 3/3. In terms of biological role, catalyzes the hydrolytic cleavage of the carbon-nitrogen bond in imidazolone-5-propanoate to yield N-formimidoyl-L-glutamate. It is the third step in the universal histidine degradation pathway. The chain is Imidazolonepropionase from Burkholderia multivorans (strain ATCC 17616 / 249).